Here is a 446-residue protein sequence, read N- to C-terminus: Na(+)-translocating NADH-quinone reductase subunit A (446 aa).

It belongs to the NqrA family. In terms of assembly, composed of six subunits; NqrA, NqrB, NqrC, NqrD, NqrE and NqrF.

It carries out the reaction a ubiquinone + n Na(+)(in) + NADH + H(+) = a ubiquinol + n Na(+)(out) + NAD(+). NQR complex catalyzes the reduction of ubiquinone-1 to ubiquinol by two successive reactions, coupled with the transport of Na(+) ions from the cytoplasm to the periplasm. NqrA to NqrE are probably involved in the second step, the conversion of ubisemiquinone to ubiquinol. This Vibrio campbellii (strain ATCC BAA-1116) protein is Na(+)-translocating NADH-quinone reductase subunit A.